The primary structure comprises 853 residues: MRARGIERNCQNWWKWGIMLLGILMTCSAADNLWVTVYYGVPVWKEATTTLFCASDAKSYETEAHNIWATHACVPTDPNPQEIALENVTENFNMWKNNMVEQMHEDIISLWDQSLKPCVKLTPLCVTLNCSDELRNNGTMGNNVTTEEKGMKNCSFNVTTVLKDKKQQVYALFYRLDIVPIDNDSSTNSTNYRLINCNTSAITQACPKVSFEPIPIHYCAPAGFAILKCRDKKFNGTGPCTNVSTVQCTHGIRPVVSTQLLLNGSLAEEEVIIRSENLTNNAKNIIAHLNESVKITCARPYQNTRQRTPIGLGQSLYTTRSRSIIGQAHCNISRAQWSKTLQQVARKLGTLLNKTIIKFKPSSGGDPEITTHSFNCGGEFFYCNTSGLFNSTWNISAWNNITESNNSTNTNITLQCRIKQIIKMVAGRKAIYAPPIERNILCSSNITGLLLTRDGGINNSTNETFRPGGGDMRDNWRSELYKYKVVQIEPLGVAPTRAKRRVVEREKRAIGLGAMFLGFLGAAGSTMGARSVTLTVQARQLMSGIVQQQNNLLRAIEAQQHLLQLTVWGIKQLQARILAVERYLKDQQLLGIWGCSGKHICTTNVPWNSSWSNRSLNEIWQNMTWMEWEREIDNYTGLIYSLIEESQTQQEKNEKELLELDKWASLWNWFSITQWLWYIKIFIMIIGGLIGLRIVFAVLSLVNRVRQGYSPLSFQTLLPAPRGPDRPEGTEEEGGERGRDRSVRLLNGFSALIWDDLRSLCLFSYHRLRDLILIAVRIVELLGRRGWDILKYLWNLLQYWSQELRNSASSLFDAIAIAVAEGTDRVIEIIQRACRAVLNIPRRIRQGLERSLL.

The N-terminal stretch at 1-31 is a signal peptide; the sequence is MRARGIERNCQNWWKWGIMLLGILMTCSAAD. The Extracellular segment spans residues 32-681; that stretch reads NLWVTVYYGV…ITQWLWYIKI (650 aa). Cys53 and Cys73 are oxidised to a cystine. 14 N-linked (GlcNAc...) asparagine; by host glycosylation sites follow: Asn87, Asn129, Asn137, Asn143, Asn153, Asn157, Asn183, Asn188, Asn198, Asn235, Asn242, Asn263, Asn277, and Asn290. Disulfide bonds link Cys118-Cys206, Cys125-Cys197, Cys130-Cys154, Cys219-Cys248, and Cys229-Cys240. The V1 stretch occupies residues 130 to 153; it reads CSDELRNNGTMGNNVTTEEKGMKN. A V2 region spans residues 154 to 197; that stretch reads CSFNVTTVLKDKKQQVYALFYRLDIVPIDNDSSTNSTNYRLINC. Residues 297–329 are V3; the sequence is CARPYQNTRQRTPIGLGQSLYTTRSRSIIGQAH. An intrachain disulfide couples Cys297 to Cys330. Residues Asn331 and Asn353 are each glycosylated (N-linked (GlcNAc...) asparagine; by host). The CD4-binding loop stretch occupies residues 362–372; sequence SSGGDPEITTH. 2 disulfide bridges follow: Cys376–Cys442 and Cys383–Cys416. A V4 region spans residues 383-416; it reads CNTSGLFNSTWNISAWNNITESNNSTNTNITLQC. Residues Asn384, Asn390, Asn394, Asn400, Asn405, Asn406, Asn411, Asn445, Asn458, Asn459, and Asn462 are each glycosylated (N-linked (GlcNAc...) asparagine; by host). V5 stretches follow at residues 457–468 and 460–468; these read INNSTNETFRPG and STNETFRPG. Residues 509 to 529 form a fusion peptide region; it reads AIGLGAMFLGFLGAAGSTMGA. Positions 571 to 589 are immunosuppression; sequence KQLQARILAVERYLKDQQL. A disulfide bridge links Cys595 with Cys601. N-linked (GlcNAc...) asparagine; by host glycosylation is found at Asn608, Asn613, Asn622, and Asn634. Residues 630–664 are a coiled coil; that stretch reads REIDNYTGLIYSLIEESQTQQEKNEKELLELDKWA. The interval 659–680 is MPER; binding to GalCer; it reads ELDKWASLWNWFSITQWLWYIK. Residues 682–702 traverse the membrane as a helical segment; that stretch reads FIMIIGGLIGLRIVFAVLSLV. Over 703–853 the chain is Cytoplasmic; the sequence is NRVRQGYSPL…IRQGLERSLL (151 aa). Positions 709–712 match the YXXL motif; contains endocytosis signal motif; sequence YSPL. The tract at residues 716–738 is disordered; the sequence is TLLPAPRGPDRPEGTEEEGGERG. A compositionally biased stretch (basic and acidic residues) spans 723–738; it reads GPDRPEGTEEEGGERG. Residues Cys761 and Cys834 are each lipidated (S-palmitoyl cysteine; by host). Positions 852-853 match the Di-leucine internalization motif motif; sequence LL.

Belongs to the HIV-1 env protein family. In terms of assembly, the mature envelope protein (Env) consists of a homotrimer of non-covalently associated gp120-gp41 heterodimers. The resulting complex protrudes from the virus surface as a spike. There seems to be as few as 10 spikes on the average virion. Interacts with host CD4, CCR5 and CXCR4. Gp120 also interacts with the C-type lectins CD209/DC-SIGN and CLEC4M/DC-SIGNR (collectively referred to as DC-SIGN(R)). Gp120 and gp41 interact with GalCer. Gp120 interacts with host ITGA4/ITGB7 complex; on CD4+ T-cells, this interaction results in rapid activation of integrin ITGAL/LFA-1, which facilitates efficient cell-to-cell spreading of HIV-1. Gp120 interacts with cell-associated heparan sulfate; this interaction increases virus infectivity on permissive cells and may be involved in infection of CD4- cells. As to quaternary structure, the mature envelope protein (Env) consists of a homotrimer of non-covalently associated gp120-gp41 heterodimers. The resulting complex protrudes from the virus surface as a spike. There seems to be as few as 10 spikes on the average virion. Highly glycosylated by host. The high number of glycan on the protein is reffered to as 'glycan shield' because it contributes to hide protein sequence from adaptive immune system. In terms of processing, palmitoylation of the transmembrane protein and of Env polyprotein (prior to its proteolytic cleavage) is essential for their association with host cell membrane lipid rafts. Palmitoylation is therefore required for envelope trafficking to classical lipid rafts, but not for viral replication. Post-translationally, specific enzymatic cleavages in vivo yield mature proteins. Envelope glycoproteins are synthesized as an inactive precursor that is heavily N-glycosylated and processed likely by host cell furin in the Golgi to yield the mature SU and TM proteins. The cleavage site between SU and TM requires the minimal sequence [KR]-X-[KR]-R. About 2 of the 9 disulfide bonds of gp41 are reduced by P4HB/PDI, following binding to CD4 receptor.

It is found in the virion membrane. The protein localises to the host cell membrane. Its subcellular location is the host endosome membrane. Its function is as follows. Oligomerizes in the host endoplasmic reticulum into predominantly trimers. In a second time, gp160 transits in the host Golgi, where glycosylation is completed. The precursor is then proteolytically cleaved in the trans-Golgi and thereby activated by cellular furin or furin-like proteases to produce gp120 and gp41. Functionally, attaches the virus to the host lymphoid cell by binding to the primary receptor CD4. This interaction induces a structural rearrangement creating a high affinity binding site for a chemokine coreceptor like CXCR4 and/or CCR5. Acts as a ligand for CD209/DC-SIGN and CLEC4M/DC-SIGNR, which are respectively found on dendritic cells (DCs), and on endothelial cells of liver sinusoids and lymph node sinuses. These interactions allow capture of viral particles at mucosal surfaces by these cells and subsequent transmission to permissive cells. HIV subverts the migration properties of dendritic cells to gain access to CD4+ T-cells in lymph nodes. Virus transmission to permissive T-cells occurs either in trans (without DCs infection, through viral capture and transmission), or in cis (following DCs productive infection, through the usual CD4-gp120 interaction), thereby inducing a robust infection. In trans infection, bound virions remain infectious over days and it is proposed that they are not degraded, but protected in non-lysosomal acidic organelles within the DCs close to the cell membrane thus contributing to the viral infectious potential during DCs' migration from the periphery to the lymphoid tissues. On arrival at lymphoid tissues, intact virions recycle back to DCs' cell surface allowing virus transmission to CD4+ T-cells. Acts as a class I viral fusion protein. Under the current model, the protein has at least 3 conformational states: pre-fusion native state, pre-hairpin intermediate state, and post-fusion hairpin state. During fusion of viral and target intracellular membranes, the coiled coil regions (heptad repeats) assume a trimer-of-hairpins structure, positioning the fusion peptide in close proximity to the C-terminal region of the ectodomain. The formation of this structure appears to drive apposition and subsequent fusion of viral and target cell membranes. Complete fusion occurs in host cell endosomes and is dynamin-dependent, however some lipid transfer might occur at the plasma membrane. The virus undergoes clathrin-dependent internalization long before endosomal fusion, thus minimizing the surface exposure of conserved viral epitopes during fusion and reducing the efficacy of inhibitors targeting these epitopes. Membranes fusion leads to delivery of the nucleocapsid into the cytoplasm. This chain is Envelope glycoprotein gp160, found in Human immunodeficiency virus type 1 group M subtype D (isolate ELI) (HIV-1).